The sequence spans 835 residues: BCL11 transcription factor A (835 aa).

Basic residues predominate over residues 1–12; it reads MSRRKQGKPQHL. The interval 1 to 41 is disordered; sequence MSRRKQGKPQHLSKREFSPEPLEAILTDDEPDHGPLGAPEG. The segment at 1–210 is required for nuclear body formation and for SUMO1 recruitment; it reads MSRRKQGKPQ…SEHGSPLTPR (210 aa). The C2HC-type zinc finger occupies 45 to 71; that stretch reads LLTCGQCQMNFPLGDILIFIEHKRKQC. Cys-48, Cys-51, His-66, and Cys-71 together coordinate Zn(2+). Ser-86 carries the post-translational modification Phosphoserine. Residues Lys-123 and Lys-164 each participate in a glycyl lysine isopeptide (Lys-Gly) (interchain with G-Cter in SUMO2) cross-link. A C2H2-type 1 zinc finger spans residues 170–193; the sequence is YTCTTCKQPFTSAWFLLQHAQNTH. The residue at position 205 (Ser-205) is a Phosphoserine. An Asymmetric dimethylarginine modification is found at Arg-271. The tract at residues 323–376 is disordered; that stretch reads AGNTSSPPLSPGRPSPMQRLLQPFQPGSKPPFLATPPLPPLQSAPPPSQPPVKS. Residues Ser-332 and Ser-337 each carry the phosphoserine modification. The segment covering 355 to 372 has biased composition (pro residues); the sequence is LATPPLPPLQSAPPPSQP. C2H2-type zinc fingers lie at residues 377–399 and 405–429; these read KSCE…RRSH and YKCN…THMH. Basic residues predominate over residues 421-430; sequence KRHMKTHMHK. Disordered regions lie at residues 421–458, 471–512, and 572–619; these read KRHM…LVGS, KSEN…ERVD, and RGHL…GLSK. A compositionally biased stretch (polar residues) spans 441–450; that stretch reads GLSTASSPEP. A phosphoserine mark is found at Ser-446 and Ser-447. The span at 482 to 506 shows a compositional bias: acidic residues; the sequence is NGDEEEEEDDEEEEEEEEEEEEELT. The span at 574–584 shows a compositional bias: basic and acidic residues; the sequence is HLAEAEGHRDT. A Phosphoserine modification is found at Ser-608. A Glycyl lysine isopeptide (Lys-Gly) (interchain with G-Cter in SUMO2) cross-link involves residue Lys-620. Phosphoserine occurs at positions 625 and 630. Residue Lys-634 forms a Glycyl lysine isopeptide (Lys-Gly) (interchain with G-Cter in SUMO1) linkage. Residues 678 to 740 are disordered; sequence DSRQSPFASS…GRPSSKEGRR (63 aa). The span at 682–696 shows a compositional bias: low complexity; the sequence is SPFASSSEHSSENGS. Phosphothreonine is present on Thr-701. Residues 706-720 are compositionally biased toward gly residues; it reads LDGGISGRSGTGSGG. The segment at 737–835 is DNA-binding; that stretch reads EGRRSDTCEY…RVLNNDIKTE (99 aa). The C2H2-type 4 zinc finger occupies 742 to 764; it reads DTCEYCGKVFKNCSNLTVHRRSH. Zn(2+) is bound by residues Cys-744, Cys-747, His-760, and His-764. The disordered stretch occupies residues 765–769; sequence TGERP. A C2H2-type 5 zinc finger spans residues 770-792; that stretch reads YKCELCNYACAQSSKLTRHMKTH. Positions 772, 775, 788, and 792 each coordinate Zn(2+). The interval 793–799 is disordered; sequence GQVGKDV. Residues 800–823 form a C2H2-type 6 zinc finger; the sequence is YKCEICKMPFSVYSTLEKHMKKWH. Residues Cys-802, Cys-805, His-818, and His-823 each contribute to the Zn(2+) site. A Glycyl lysine isopeptide (Lys-Gly) (interchain with G-Cter in SUMO2) cross-link involves residue Lys-833.

As to quaternary structure, homotetrameric; self-associates via C2HC-type zinc finger domain. Interacts with MTA2, a component of the nucleosome remodeling and deacetylase (NuRD) repressor complex. Interacts (via its C2H2-type zinc finger domains 4, 5 and 6) with promoter region of gamma-globulin. Interacts with NR2F1, PIAS3, NR2F2 and NR2F6. Isoform 1, isoform 2 and isoform 3 form homodimers and heterodimers. Isoform 2 interacts with TBR1. Sumoylated with SUMO1. Expressed at high levels in brain, spleen thymus, bone marrow and testis. Expressed in CD34-positive myeloid precursor cells, B-cells, monocytes and megakaryocytes. Expression is tightly regulated during B-cell development. In terms of tissue distribution, expressed in fetal and adult brain, and in the plasmacytoid dendritic cell.

The protein resides in the cytoplasm. Its subcellular location is the nucleus. It localises to the chromosome. It is found in the nucleus matrix. Transcription factor. Associated with the BAF SWI/SNF chromatin remodeling complex. Binds to the 5'-TGACCA-3' sequence motif in regulatory regions of target genes, including a distal promoter of the HBG1 hemoglobin subunit gamma-1 gene. Involved in regulation of the developmental switch from gamma- to beta-globin, probably via direct repression of HBG1; hence indirectly repressing fetal hemoglobin (HbF) level. Involved in brain development. May play a role in hematopoiesis. Essential factor in lymphopoiesis required for B-cell formation in fetal liver. May function as a modulator of the transcriptional repression activity of NR2F2. This Homo sapiens (Human) protein is BCL11 transcription factor A (BCL11A).